A 147-amino-acid chain; its full sequence is 3-dehydroquinate dehydratase (147 aa).

Catalysis depends on Y23, which acts as the Proton acceptor. Substrate-binding residues include N74, H80, and D87. The active-site Proton donor is H100. Substrate is bound by residues L101 to S102 and R111.

The protein belongs to the type-II 3-dehydroquinase family. Homododecamer.

It catalyses the reaction 3-dehydroquinate = 3-dehydroshikimate + H2O. Its pathway is metabolic intermediate biosynthesis; chorismate biosynthesis; chorismate from D-erythrose 4-phosphate and phosphoenolpyruvate: step 3/7. Functionally, catalyzes a trans-dehydration via an enolate intermediate. The sequence is that of 3-dehydroquinate dehydratase from Glaesserella parasuis serovar 5 (strain SH0165) (Haemophilus parasuis).